Reading from the N-terminus, the 151-residue chain is Small ribosomal subunit protein uS15 (151 aa).

Lys27 carries the post-translational modification N6-acetyllysine; alternate. Lys27 is modified (N6-succinyllysine; alternate). A Glycyl lysine isopeptide (Lys-Gly) (interchain with G-Cter in ubiquitin) cross-link involves residue Lys27. The residue at position 30 (Ser30) is a Phosphoserine. Residue Lys34 is modified to N6-succinyllysine. Phosphotyrosine is present on Tyr38. Lys43 participates in a covalent cross-link: Glycyl lysine isopeptide (Lys-Gly) (interchain with G-Cter in SUMO2).

Belongs to the universal ribosomal protein uS15 family. In terms of assembly, component of the small ribosomal subunit. Part of the small subunit (SSU) processome, composed of more than 70 proteins and the RNA chaperone small nucleolar RNA (snoRNA) U3. In terms of processing, ubiquitinated at Lys-27 by RNF14 and RNF25 in response to ribosome collisions (ribosome stalling).

The protein resides in the cytoplasm. Its subcellular location is the nucleus. It is found in the nucleolus. In terms of biological role, component of the small ribosomal subunit. The ribosome is a large ribonucleoprotein complex responsible for the synthesis of proteins in the cell. Part of the small subunit (SSU) processome, first precursor of the small eukaryotic ribosomal subunit. During the assembly of the SSU processome in the nucleolus, many ribosome biogenesis factors, an RNA chaperone and ribosomal proteins associate with the nascent pre-rRNA and work in concert to generate RNA folding, modifications, rearrangements and cleavage as well as targeted degradation of pre-ribosomal RNA by the RNA exosome. In Homo sapiens (Human), this protein is Small ribosomal subunit protein uS15.